The sequence spans 1352 residues: Patatin-like phospholipase domain-containing protein 7 (1352 aa).

Topologically, residues 1-36 (MQNEEDACLEAGYCLGTTLSSWRLHFMEEQSQSTML) are lumenal. A helical membrane pass occupies residues 37-57 (MGIGIGALLTLAFVGITFFFV). Topologically, residues 58-1352 (YRRVRRLRRA…DQGPRLEHPS (1295 aa)) are cytoplasmic. A nucleoside 3',5'-cyclic phosphate is bound at residue 170 to 297 (VLGHFEKPLF…VRVVQIIMVR (128 aa)). The tract at residues 340 to 364 (MSYGPEEQLERSLRPSEFSSSDHGS) is disordered. A phosphoserine mark is found at serine 341 and serine 379. Residues 384 to 411 (SNHGEVDELRQSQGSGSNTSAFQESHEG) form a disordered region. Residues 394–406 (QSQGSGSNTSAFQ) show a composition bias toward polar residues. A nucleoside 3',5'-cyclic phosphate contacts are provided by residues 499-585 (FLHV…YEIM) and 613-718 (ALDW…LGEK). An involved in the binding to lipid droplets region spans residues 681-967 (VHAVRDSELA…RGCAQVGILR (287 aa)). A PNPLA domain is found at 950 to 1116 (LVLGGGGARG…INNLPADVAR (167 aa)). The short motif at 954–959 (GGGARG) is the GXGXXG element. The GXSXG motif lies at 981–985 (GTSIG). The active-site Nucleophile is serine 983. The Proton acceptor role is filled by aspartate 1103. A DGA/G motif is present at residues 1103–1105 (DGG). Residue serine 1280 is modified to Phosphoserine. Position 1284 is a phosphothreonine (threonine 1284). The interval 1295-1352 (KETYADFQSTGIELDSDSEYEPSMLQGPPSLTSPEQSQDSFPWLPNQDDQGPRLEHPS) is disordered. The span at 1323-1334 (PSLTSPEQSQDS) shows a compositional bias: polar residues.

It belongs to the NTE family. In terms of tissue distribution, expressed in white and brown adipose tissue, cardiac muscle, skeletal muscle, and testis. As to expression, expressed in white adipose tissue, cardiac muscle, skeletal muscle, and testis.

The protein resides in the endoplasmic reticulum membrane. The protein localises to the lipid droplet. It catalyses the reaction a 1-acyl-sn-glycero-3-phosphocholine + H2O = sn-glycerol 3-phosphocholine + a fatty acid + H(+). The enzyme catalyses 1-(9Z-octadecenoyl)-sn-glycero-3-phosphocholine + H2O = sn-glycerol 3-phosphocholine + (9Z)-octadecenoate + H(+). The catalysed reaction is 1-(9Z-octadecenoyl)-sn-glycero-3-phosphoethanolamine + H2O = sn-glycero-3-phosphoethanolamine + (9Z)-octadecenoate + H(+). It carries out the reaction 1-(9Z-octadecenoyl)-sn-glycero-3-phospho-L-serine + H2O = sn-glycero-3-phospho-L-serine + (9Z)-octadecenoate + H(+). It catalyses the reaction 1-hexadecanoyl-sn-glycero-3-phosphocholine + H2O = sn-glycerol 3-phosphocholine + hexadecanoate + H(+). The enzyme catalyses 1-hexadecanoyl-sn-glycero-3-phosphate + H2O = sn-glycerol 3-phosphate + hexadecanoate + H(+). With respect to regulation, cAMP does not regulate lysophospholipase activity in vitro. Slightly inhibited by organophosphorus (OP) compounds such as mipafox, which is likely why mice are less sensitive to distal axonophathy induced by OPs compared to humans. Functionally, lysophospholipase which preferentially deacylates unsaturated lysophosphatidylcholine (C18:1), generating glycerophosphocholine. Can also deacylate, to a lesser extent, lysophosphatidylethanolamine (C18:1), lysophosphatidyl-L-serine (C18:1) and lysophosphatidic acid (C16:0). Lysophospholipase. Its function is as follows. Lacks lysophospholipase activity. This is Patatin-like phospholipase domain-containing protein 7 (Pnpla7) from Mus musculus (Mouse).